The following is a 255-amino-acid chain: Acetyl-coenzyme A carboxylase carboxyl transferase subunit alpha (255 aa).

The CoA carboxyltransferase C-terminal domain maps to 1-235; that stretch reads MNIAKIVREA…KKELQTELAR (235 aa).

This sequence belongs to the AccA family. In terms of assembly, acetyl-CoA carboxylase is a heterohexamer composed of biotin carboxyl carrier protein (AccB), biotin carboxylase (AccC) and two subunits each of ACCase subunit alpha (AccA) and ACCase subunit beta (AccD).

The protein localises to the cytoplasm. It carries out the reaction N(6)-carboxybiotinyl-L-lysyl-[protein] + acetyl-CoA = N(6)-biotinyl-L-lysyl-[protein] + malonyl-CoA. The protein operates within lipid metabolism; malonyl-CoA biosynthesis; malonyl-CoA from acetyl-CoA: step 1/1. Functionally, component of the acetyl coenzyme A carboxylase (ACC) complex. First, biotin carboxylase catalyzes the carboxylation of biotin on its carrier protein (BCCP) and then the CO(2) group is transferred by the carboxyltransferase to acetyl-CoA to form malonyl-CoA. The chain is Acetyl-coenzyme A carboxylase carboxyl transferase subunit alpha from Streptococcus pneumoniae serotype 19F (strain G54).